Consider the following 120-residue polypeptide: Large ribosomal subunit protein bL21 (120 aa).

It belongs to the bacterial ribosomal protein bL21 family. Part of the 50S ribosomal subunit. Contacts protein L20.

Its function is as follows. This protein binds to 23S rRNA in the presence of protein L20. In Roseiflexus sp. (strain RS-1), this protein is Large ribosomal subunit protein bL21.